The sequence spans 400 residues: tRNA(Met) cytidine acetate ligase (400 aa).

Residues 7 to 20 (IVEYNPFHNGHQYH), glycine 101, asparagine 162, and arginine 187 each bind ATP.

Belongs to the TmcAL family.

Its subcellular location is the cytoplasm. It catalyses the reaction cytidine(34) in elongator tRNA(Met) + acetate + ATP = N(4)-acetylcytidine(34) in elongator tRNA(Met) + AMP + diphosphate. Its function is as follows. Catalyzes the formation of N(4)-acetylcytidine (ac(4)C) at the wobble position of elongator tRNA(Met), using acetate and ATP as substrates. First activates an acetate ion to form acetyladenylate (Ac-AMP) and then transfers the acetyl group to tRNA to form ac(4)C34. The sequence is that of tRNA(Met) cytidine acetate ligase from Oceanobacillus iheyensis (strain DSM 14371 / CIP 107618 / JCM 11309 / KCTC 3954 / HTE831).